Here is a 529-residue protein sequence, read N- to C-terminus: Ribonuclease Y (529 aa).

Residues 4-24 form a helical membrane-spanning segment; sequence GLIYISLEVLVACLITALVMY. The KH domain occupies 216-297; sequence LTTRIALPCS…NRIEEVYHRV (82 aa). The HD domain maps to 342–435; it reads ALQHSKEVAL…VCAADALSAG (94 aa).

Belongs to the RNase Y family.

The protein localises to the cell membrane. Endoribonuclease that initiates mRNA decay. In Helicobacter pylori (strain ATCC 700392 / 26695) (Campylobacter pylori), this protein is Ribonuclease Y.